The primary structure comprises 239 residues: DNA repair protein RecO (239 aa).

Belongs to the RecO family.

Involved in DNA repair and RecF pathway recombination. This is DNA repair protein RecO from Bifidobacterium longum subsp. infantis (strain ATCC 15697 / DSM 20088 / JCM 1222 / NCTC 11817 / S12).